A 78-amino-acid chain; its full sequence is Acyl carrier protein (78 aa).

The Carrier domain maps to 2-77 (STIEERVKKI…AAIDYINGHQ (76 aa)). The residue at position 37 (Ser-37) is an O-(pantetheine 4'-phosphoryl)serine.

This sequence belongs to the acyl carrier protein (ACP) family. Post-translationally, 4'-phosphopantetheine is transferred from CoA to a specific serine of apo-ACP by AcpS. This modification is essential for activity because fatty acids are bound in thioester linkage to the sulfhydryl of the prosthetic group.

Its subcellular location is the cytoplasm. It functions in the pathway lipid metabolism; fatty acid biosynthesis. Its function is as follows. Carrier of the growing fatty acid chain in fatty acid biosynthesis. The chain is Acyl carrier protein from Shigella flexneri.